Consider the following 339-residue polypeptide: Nicotinate-nucleotide--dimethylbenzimidazole phosphoribosyltransferase (339 aa).

The Proton acceptor role is filled by E306.

The protein belongs to the CobT family.

It catalyses the reaction 5,6-dimethylbenzimidazole + nicotinate beta-D-ribonucleotide = alpha-ribazole 5'-phosphate + nicotinate + H(+). It functions in the pathway nucleoside biosynthesis; alpha-ribazole biosynthesis; alpha-ribazole from 5,6-dimethylbenzimidazole: step 1/2. In terms of biological role, catalyzes the synthesis of alpha-ribazole-5'-phosphate from nicotinate mononucleotide (NAMN) and 5,6-dimethylbenzimidazole (DMB). The protein is Nicotinate-nucleotide--dimethylbenzimidazole phosphoribosyltransferase of Brucella anthropi (strain ATCC 49188 / DSM 6882 / CCUG 24695 / JCM 21032 / LMG 3331 / NBRC 15819 / NCTC 12168 / Alc 37) (Ochrobactrum anthropi).